We begin with the raw amino-acid sequence, 473 residues long: MEMQMSNSDRYRIEHDSMGDLRVPIDALWGAQTQRAIENFPISGRSMPQGFIHALGFIKAAAAKVNAELGLLPKPMAKEIEAAALDVAAGRYDADFPVDIYQTGSGTSSNMNANEVIATLAMRATKEPIHPNDHVNLGQSSNDVVPTAIRISATLAVQGRLLPALKHLRKMINKRARGLGSVVKTGRTHLMDAMPLTFAQEFGAWSAQIVSAEARLNDTLKRLHRLPLGGTAIGTGINTDPHFGRNAVKVLSALTGIHFESANNKFEGLAAQDDLVELSGQFNALAVALMKIANDLRWMNAGPLAGLGEIELPALQPGSSIMPGKVNPVIPEAVVMVASQVIGHHTAVTVAGQSGNFQLNVTLPLIAYNLLESATLLGNVVMLLADKVIVGLKVRQDRVQEVLERNPILVTALNPIIGYEKAAVIAKRAYKEHRPVLEVACEESNLNPVELARLLDPTALTEGGIYVVGGGGG.

Substrate contacts are provided by residues 105 to 107 (SGT), 130 to 133 (HPND), 140 to 142 (SSN), and threonine 188. Residue histidine 189 is the Proton donor/acceptor of the active site. Serine 319 is a catalytic residue. Substrate contacts are provided by residues serine 320 and 325–327 (KVN).

The protein belongs to the class-II fumarase/aspartase family. Fumarase subfamily. In terms of assembly, homotetramer.

The protein localises to the cytoplasm. It carries out the reaction (S)-malate = fumarate + H2O. Its pathway is carbohydrate metabolism; tricarboxylic acid cycle; (S)-malate from fumarate: step 1/1. Functionally, involved in the TCA cycle. Catalyzes the stereospecific interconversion of fumarate to L-malate. The protein is Fumarate hydratase class II of Xylella fastidiosa (strain 9a5c).